The sequence spans 225 residues: UPF0758 protein Sfri_3828 (225 aa).

Residues 102–224 enclose the MPN domain; that stretch reads ILTNPDLTRD…IVSFAERGWI (123 aa). Zn(2+) contacts are provided by His-173, His-175, and Asp-186. Positions 173 to 186 match the JAMM motif motif; that stretch reads HNHPSGIAEPSQAD.

Belongs to the UPF0758 family.

This chain is UPF0758 protein Sfri_3828, found in Shewanella frigidimarina (strain NCIMB 400).